The sequence spans 191 residues: dTTP/UTP pyrophosphatase (191 aa).

The Proton acceptor role is filled by aspartate 75.

The protein belongs to the Maf family. YhdE subfamily. A divalent metal cation serves as cofactor.

It is found in the cytoplasm. It carries out the reaction dTTP + H2O = dTMP + diphosphate + H(+). It catalyses the reaction UTP + H2O = UMP + diphosphate + H(+). Nucleoside triphosphate pyrophosphatase that hydrolyzes dTTP and UTP. May have a dual role in cell division arrest and in preventing the incorporation of modified nucleotides into cellular nucleic acids. The polypeptide is dTTP/UTP pyrophosphatase (Aliivibrio fischeri (strain ATCC 700601 / ES114) (Vibrio fischeri)).